Reading from the N-terminus, the 87-residue chain is Small ribosomal subunit protein uS15 (87 aa).

This sequence belongs to the universal ribosomal protein uS15 family. Part of the 30S ribosomal subunit. Forms a bridge to the 50S subunit in the 70S ribosome, contacting the 23S rRNA.

Functionally, one of the primary rRNA binding proteins, it binds directly to 16S rRNA where it helps nucleate assembly of the platform of the 30S subunit by binding and bridging several RNA helices of the 16S rRNA. Its function is as follows. Forms an intersubunit bridge (bridge B4) with the 23S rRNA of the 50S subunit in the ribosome. This chain is Small ribosomal subunit protein uS15, found in Clostridium acetobutylicum (strain ATCC 824 / DSM 792 / JCM 1419 / IAM 19013 / LMG 5710 / NBRC 13948 / NRRL B-527 / VKM B-1787 / 2291 / W).